We begin with the raw amino-acid sequence, 150 residues long: Macrodomain Ter protein (150 aa).

The protein belongs to the MatP family. As to quaternary structure, homodimer.

Its subcellular location is the cytoplasm. Functionally, required for spatial organization of the terminus region of the chromosome (Ter macrodomain) during the cell cycle. Prevents early segregation of duplicated Ter macrodomains during cell division. Binds specifically to matS, which is a 13 bp signature motif repeated within the Ter macrodomain. This Erwinia tasmaniensis (strain DSM 17950 / CFBP 7177 / CIP 109463 / NCPPB 4357 / Et1/99) protein is Macrodomain Ter protein.